A 284-amino-acid polypeptide reads, in one-letter code: MKRGCAIAVMICGLITSVSAASAADLIVQEPVFEPLPQPALAGWYLRGDIGYNFKSKTGGKWNFWNQFEEPYRGVDDTFNYDDFSLKGGASYGVGVGYRFNDMLRTDLTLDYFRASINGRTNCPSYVKSSHGLNPVEDNCHYEDNSKASVWTAMANAYVDLPRVGPLTPYLGAGIGAAYVKYDTWKTSEICPTCTLQSDKDGFDSWRFAMALMAGVSYDLTDQLKLDLGYRYLRVNGGNAYGYDEQDRQVINQYGQGAGADGPQAKDNGFNIHTVRAGLRYEFR.

The signal sequence occupies residues 1–23; the sequence is MKRGCAIAVMICGLITSVSAASA.

Belongs to the surface antigen msp4 family.

This is an uncharacterized protein from Brucella suis biovar 1 (strain 1330).